The following is an 868-amino-acid chain: Pentatricopeptide repeat-containing protein At2g27610 (868 aa).

18 PPR repeats span residues 57–91 (DRES…GMEM), 92–126 (DCSI…GFLD), 127–157 (DVSV…MKER), 158–192 (NVVT…GTQP), 193–227 (NSFT…GLDK), 228–258 (TIPV…TEVK), 259–293 (SVVT…YVRL), 294–328 (SESS…GFLF), 329–359 (DQNI…IGCV), 361–395 (NVVS…GVRP), 396–426 (NEFT…NYER), 427–457 (SSTV…IDDK), 458–492 (DIVA…GIKP), 493–528 (NEFT…RLDS), 529–559 (SLCV…QREK), 560–594 (DLVS…KVKM), 595–625 (DGVT…MVRD), and 631–661 (TKEH…MPNP). The tract at residues 666 to 741 (IWRTILAACR…EPGYSWIEVK (76 aa)) is type E motif. The tract at residues 742–772 (NKTYSFLAGDRSHPLKDQIYMKLEDLSTRLK) is type E(+) motif. The tract at residues 773–868 (DLGYEPDTSY…DGVCSCGDFW (96 aa)) is type DYW motif.

This sequence belongs to the PPR family. PCMP-H subfamily.

The polypeptide is Pentatricopeptide repeat-containing protein At2g27610 (PCMP-H60) (Arabidopsis thaliana (Mouse-ear cress)).